Here is a 194-residue protein sequence, read N- to C-terminus: Probable GTP-binding protein EngB (194 aa).

One can recognise an EngB-type G domain in the interval 22–194; that stretch reads PLPEVALAGR…AWKAILHAIS (173 aa). Residues 30–37, 57–61, 75–78, 142–145, and 174–176 contribute to the GTP site; these read GRSNVGKS, GKTQT, DVPG, TKCD, and FSS. Residues serine 37 and threonine 59 each coordinate Mg(2+).

Belongs to the TRAFAC class TrmE-Era-EngA-EngB-Septin-like GTPase superfamily. EngB GTPase family. Mg(2+) is required as a cofactor.

Its function is as follows. Necessary for normal cell division and for the maintenance of normal septation. This Halalkalibacterium halodurans (strain ATCC BAA-125 / DSM 18197 / FERM 7344 / JCM 9153 / C-125) (Bacillus halodurans) protein is Probable GTP-binding protein EngB.